The primary structure comprises 216 residues: Ion-translocating oxidoreductase complex subunit G (216 aa).

Residues 14–34 (ALVLGSFGFLAASFVSIIYVI) traverse the membrane as a helical segment. An FMN phosphoryl threonine modification is found at T181.

It belongs to the RnfG family. As to quaternary structure, the complex is composed of six subunits: RnfA, RnfB, RnfC, RnfD, RnfE and RnfG. It depends on FMN as a cofactor.

The protein resides in the cell inner membrane. Functionally, part of a membrane-bound complex that couples electron transfer with translocation of ions across the membrane. This Buchnera aphidicola subsp. Baizongia pistaciae (strain Bp) protein is Ion-translocating oxidoreductase complex subunit G.